The chain runs to 147 residues: uncharacterized protein (147 aa).

This is an uncharacterized protein from Escherichia coli.